Reading from the N-terminus, the 150-residue chain is 6,7-dimethyl-8-ribityllumazine synthase (150 aa).

5-amino-6-(D-ribitylamino)uracil-binding positions include Phe11, 43–45 (VFD), and 67–69 (AVI). (2S)-2-hydroxy-3-oxobutyl phosphate is bound at residue 72–73 (AT). The Proton donor role is filled by His75. Leu100 contacts 5-amino-6-(D-ribitylamino)uracil. Residue Arg115 participates in (2S)-2-hydroxy-3-oxobutyl phosphate binding.

It belongs to the DMRL synthase family.

The enzyme catalyses (2S)-2-hydroxy-3-oxobutyl phosphate + 5-amino-6-(D-ribitylamino)uracil = 6,7-dimethyl-8-(1-D-ribityl)lumazine + phosphate + 2 H2O + H(+). It functions in the pathway cofactor biosynthesis; riboflavin biosynthesis; riboflavin from 2-hydroxy-3-oxobutyl phosphate and 5-amino-6-(D-ribitylamino)uracil: step 1/2. Its function is as follows. Catalyzes the formation of 6,7-dimethyl-8-ribityllumazine by condensation of 5-amino-6-(D-ribitylamino)uracil with 3,4-dihydroxy-2-butanone 4-phosphate. This is the penultimate step in the biosynthesis of riboflavin. In Pyrobaculum calidifontis (strain DSM 21063 / JCM 11548 / VA1), this protein is 6,7-dimethyl-8-ribityllumazine synthase.